Reading from the N-terminus, the 414-residue chain is MLRKRLQAGLCSLLLVLVLVFGPMERAIAFTDEQDLLLQAWRYVSQAYVDETFNHQNWWLIRQKFLKRPLKTRDEAYEAVGEMLALLDDPYTRLLRPEQYRSLKVSTSGELSGVGLQINVNPEVDVLEVILPLPGSPAEAAGIEAKDQILAIDGIDTRNIGLEEAAARMRGKKGSTVSLTVKSPKTDTVRTVKVTRDTIALNPVYDKLDEKNGEKVGYIRLNQFSANAKTEIIKSLNQLQKQGADRYVLDLRNNPGGLLQAGIEIARLWLDQETIVYTVNRQGIFESYSAVGQPLTDAPLVVLVNQATASASEILAGALQDNGRAMLVGEKTFGKGLIQSLFELPDGAGMAVTVAKYETPLHHDINKLGIMPDEVVPQEPIGYAMMGSETDLQYQAALDLLTQDQAIAQISQAS.

The signal sequence occupies residues 1-29; the sequence is MLRKRLQAGLCSLLLVLVLVFGPMERAIA. Positions 100-184 constitute a PDZ domain; sequence YRSLKVSTSG…STVSLTVKSP (85 aa). Active-site charge relay system residues include Ser-310, Asp-321, and Lys-335.

It belongs to the peptidase S41A family.

It localises to the cellular thylakoid lumen. It carries out the reaction The enzyme shows specific recognition of a C-terminal tripeptide, Xaa-Yaa-Zaa, in which Xaa is preferably Ala or Leu, Yaa is preferably Ala or Tyr, and Zaa is preferably Ala, but then cleaves at a variable distance from the C-terminus. A typical cleavage is -Ala-Ala-|-Arg-Ala-Ala-Lys-Glu-Asn-Tyr-Ala-Leu-Ala-Ala.. In terms of biological role, cleavage of the 16 C-terminal residues from the D1 precursor of photosystem II (PSII). This proteolytic processing is necessary to allow the light-driven assembly of the oxygen-evolving cluster (a tetranuclear manganese), which is responsible for photosynthetic water oxidation. The polypeptide is Carboxyl-terminal-processing protease (ctpA) (Picosynechococcus sp. (strain ATCC 27264 / PCC 7002 / PR-6) (Agmenellum quadruplicatum)).